The following is a 1398-amino-acid chain: DNA-directed RNA polymerase subunit beta' (1398 aa).

Zn(2+) is bound by residues cysteine 73, cysteine 75, cysteine 88, and cysteine 91. Mg(2+) is bound by residues aspartate 464, aspartate 466, and aspartate 468. The Zn(2+) site is built by cysteine 823, cysteine 897, cysteine 904, and cysteine 907.

Belongs to the RNA polymerase beta' chain family. As to quaternary structure, the RNAP catalytic core consists of 2 alpha, 1 beta, 1 beta' and 1 omega subunit. When a sigma factor is associated with the core the holoenzyme is formed, which can initiate transcription. Requires Mg(2+) as cofactor. Zn(2+) is required as a cofactor.

The enzyme catalyses RNA(n) + a ribonucleoside 5'-triphosphate = RNA(n+1) + diphosphate. In terms of biological role, DNA-dependent RNA polymerase catalyzes the transcription of DNA into RNA using the four ribonucleoside triphosphates as substrates. This chain is DNA-directed RNA polymerase subunit beta', found in Gluconacetobacter diazotrophicus (strain ATCC 49037 / DSM 5601 / CCUG 37298 / CIP 103539 / LMG 7603 / PAl5).